The chain runs to 1588 residues: Ubiquitin carboxyl-terminal hydrolase 54 (1588 aa).

Arg12 is modified (omega-N-methylarginine). A USP domain is found at Lys31–Pro352. The active-site Nucleophile is the Cys42. Zn(2+) contacts are provided by His67, Cys69, Cys74, Cys77, His133, Cys145, Cys150, His153, Cys166, Cys169, Cys225, and Cys229. His302 (proton acceptor) is an active-site residue. Basic and acidic residues-rich tracts occupy residues Gly382–Gln391 and Ser424–Ala434. Disordered regions lie at residues Gly382–Arg519, Phe555–His577, and Glu601–Ser624. Ser424 carries the phosphoserine modification. The segment covering Thr453–Gly471 has biased composition (polar residues). Positions Thr499–Lys513 are enriched in low complexity. The span at Phe555–Gly572 shows a compositional bias: basic and acidic residues. The segment covering Glu601–Ser616 has biased composition (low complexity). Phosphoserine is present on residues Ser613 and Ser616. A coiled-coil region spans residues Glu682 to Gly712. Disordered stretches follow at residues Arg801–Thr834, Gln1089–Tyr1182, Ser1221–Arg1242, and Trp1491–Gly1561. A compositionally biased stretch (low complexity) spans Gln808 to Gln826. Positions Gly1126–Cys1147 are enriched in basic and acidic residues. Position 1138 is a phosphoserine (Ser1138). The segment covering Pro1510–Ser1524 has biased composition (polar residues). Over residues Arg1536 to Arg1547 the composition is skewed to basic and acidic residues.

The protein belongs to the peptidase C19 family.

The enzyme catalyses Thiol-dependent hydrolysis of ester, thioester, amide, peptide and isopeptide bonds formed by the C-terminal Gly of ubiquitin (a 76-residue protein attached to proteins as an intracellular targeting signal).. Functionally, deubiquitinase that specifically mediates 'Lys-63'-linked deubiquitination of substrates with a polyubiquitin chain composed of at least 3 ubiquitins. Specifically recognizes ubiquitin chain in position S2 and catalyzes cleavage of polyubiquitin within 'Lys-63'-linked chains. Not able to deubiquitinate substrates with shorter ubiquitin chains. Mediates deubiquitination of PLK4, maintaining PLK4 stability by reducing its ubiquitination-mediated degradation. The polypeptide is Ubiquitin carboxyl-terminal hydrolase 54 (Usp54) (Mus musculus (Mouse)).